The chain runs to 354 residues: GTPase Obg (354 aa).

Residues 1 to 159 (MKFLDQCKIY…RWIWLRLKLI (159 aa)) enclose the Obg domain. The 169-residue stretch at 160–328 (ADVGLVGLPN…LLRAAYKQVR (169 aa)) folds into the OBG-type G domain. GTP is bound by residues 166–173 (GLPNAGKS), 191–195 (FTTLT), 213–216 (DIPG), 280–283 (NKID), and 309–311 (SGV). Residues serine 173 and threonine 193 each contribute to the Mg(2+) site. Acidic residues predominate over residues 335-345 (EEEIDDDEDHV). The interval 335–354 (EEEIDDDEDHVDETPGGWTP) is disordered.

It belongs to the TRAFAC class OBG-HflX-like GTPase superfamily. OBG GTPase family. Monomer. It depends on Mg(2+) as a cofactor.

It is found in the cytoplasm. An essential GTPase which binds GTP, GDP and possibly (p)ppGpp with moderate affinity, with high nucleotide exchange rates and a fairly low GTP hydrolysis rate. Plays a role in control of the cell cycle, stress response, ribosome biogenesis and in those bacteria that undergo differentiation, in morphogenesis control. The sequence is that of GTPase Obg from Caulobacter vibrioides (strain ATCC 19089 / CIP 103742 / CB 15) (Caulobacter crescentus).